The sequence spans 230 residues: Large ribosomal subunit protein uL1 (230 aa).

This sequence belongs to the universal ribosomal protein uL1 family. As to quaternary structure, part of the 50S ribosomal subunit.

Functionally, binds directly to 23S rRNA. The L1 stalk is quite mobile in the ribosome, and is involved in E site tRNA release. Its function is as follows. Protein L1 is also a translational repressor protein, it controls the translation of the L11 operon by binding to its mRNA. The chain is Large ribosomal subunit protein uL1 from Staphylococcus aureus (strain Mu3 / ATCC 700698).